The chain runs to 351 residues: AA9 family lytic polysaccharide monooxygenase A (351 aa).

Residue His-1 coordinates Cu(2+). Cysteines 52 and 178 form a disulfide. The N-linked (GlcNAc...) asparagine glycan is linked to Asn-53. Residue His-86 participates in Cu(2+) binding. Asn-138 carries N-linked (GlcNAc...) asparagine glycosylation. O2 is bound by residues His-164 and Gln-173. Tyr-175 serves as a coordination point for Cu(2+). Ser-280 is lipidated: GPI-anchor amidated serine. Positions 281 to 351 are cleaved as a propeptide — removed in mature form; sequence SAIGTSTASS…RSGTLGRLSF (71 aa).

It belongs to the polysaccharide monooxygenase AA9 family. Cu(2+) is required as a cofactor.

Its subcellular location is the cell membrane. The enzyme catalyses [(1-&gt;4)-beta-D-glucosyl]n+m + reduced acceptor + O2 = 4-dehydro-beta-D-glucosyl-[(1-&gt;4)-beta-D-glucosyl]n-1 + [(1-&gt;4)-beta-D-glucosyl]m + acceptor + H2O.. Lytic polysaccharide monooxygenase (LPMO) that depolymerizes crystalline and amorphous polysaccharides via the oxidation of scissile alpha- or beta-(1-4)-glycosidic bonds, yielding C1 or C4 oxidation products. Catalysis by LPMOs requires the reduction of the active-site copper from Cu(II) to Cu(I) by a reducing agent and H(2)O(2) or O(2) as a cosubstrate. Functionally, has broad specificity, cleaving at any position along the beta-glucan backbone of xyloglucan, regardless of substitutions. Shows minor activity on glucomannan. This chain is AA9 family lytic polysaccharide monooxygenase A, found in Gloeophyllum trabeum (Brown rot fungus).